Consider the following 420-residue polypeptide: uncharacterized protein (420 aa).

Residues 1–25 (MRYAMNKIPALLLVGALIIATVASG) form the signal peptide. An N-acetylcysteine modification is found at C26. C26 carries S-archaeol cysteine lipidation.

The protein belongs to the bacterial solute-binding protein 1 family.

The protein resides in the cell membrane. In terms of biological role, probably part of a binding-protein-dependent transport system PH1036/38/39. This is an uncharacterized protein from Pyrococcus horikoshii (strain ATCC 700860 / DSM 12428 / JCM 9974 / NBRC 100139 / OT-3).